The chain runs to 460 residues: Argininosuccinate lyase (460 aa).

This sequence belongs to the lyase 1 family. Argininosuccinate lyase subfamily.

Its subcellular location is the cytoplasm. The catalysed reaction is 2-(N(omega)-L-arginino)succinate = fumarate + L-arginine. Its pathway is amino-acid biosynthesis; L-arginine biosynthesis; L-arginine from L-ornithine and carbamoyl phosphate: step 3/3. This Rhodopirellula baltica (strain DSM 10527 / NCIMB 13988 / SH1) protein is Argininosuccinate lyase.